The following is a 446-amino-acid chain: Mannosyltransferase KTR6 (446 aa).

Over 1–8 (MHVLLSKK) the chain is Cytoplasmic. Residues 9–29 (IARFLLISFVFVLALMVTINH) form a helical; Signal-anchor for type II membrane protein membrane-spanning segment. The stem region stretch occupies residues 30 to 114 (PKTKQMSEQY…MVPSYINHRG (85 aa)). Over 30–446 (PKTKQMSEQY…DKPEGWDRLP (417 aa)) the chain is Lumenal. Asparagine 82 and asparagine 98 each carry an N-linked (GlcNAc...) asparagine glycan. A catalytic region spans residues 115–446 (SPPKACFVSL…DKPEGWDRLP (332 aa)). Residue glutamate 334 is the Nucleophile of the active site.

Belongs to the glycosyltransferase 15 family.

Its subcellular location is the membrane. It participates in protein modification; protein glycosylation. Glycosyltransferase that transfers an alpha-D-mannosyl residue from GDP-mannose into lipid-linked oligosaccharide, forming an alpha-(1-&gt;2)-D-mannosyl-D-mannose linkage. Required for addition of mannosylphosphate in yeast mannan. Recognizes any oligosaccharides with at least one alpha-1,2-linked mannobiose unit. This is Mannosyltransferase KTR6 (KTR6) from Saccharomyces cerevisiae (strain ATCC 204508 / S288c) (Baker's yeast).